A 202-amino-acid polypeptide reads, in one-letter code: MQAEDLKLILASTSPRRRELLGRFGLPFEVLGVEVEEVPRCGEAAEDYVRRVASDKSARGQSMAPSDAAVLAADTEVVLDGQIFGKPQGAEHAREMLGRLSGRTHEVLSAVSLRRGDCHWQALSVSRVRFRDLGLEEIDAYWASGEPADKAGAYAIQGRGELFVAELQGSFSGVMGLPLLETARLLRHLGLGTARLLAGAAP.

D74 functions as the Proton acceptor in the catalytic mechanism.

The protein belongs to the Maf family. YhdE subfamily. A divalent metal cation is required as a cofactor.

The protein resides in the cytoplasm. It carries out the reaction dTTP + H2O = dTMP + diphosphate + H(+). The enzyme catalyses UTP + H2O = UMP + diphosphate + H(+). Its function is as follows. Nucleoside triphosphate pyrophosphatase that hydrolyzes dTTP and UTP. May have a dual role in cell division arrest and in preventing the incorporation of modified nucleotides into cellular nucleic acids. The protein is dTTP/UTP pyrophosphatase of Methylococcus capsulatus (strain ATCC 33009 / NCIMB 11132 / Bath).